The chain runs to 334 residues: MQLKIFLFKLLFLIFFSFSFNNFAFGFFFNNRYDSNFFIDKKYTKDFIFFKKNECFSFLKYKKNFFLNKKIIIGNNHFIGFFQKNRFKIFYIVKSKDTMYSIAKNSGYNYHELSKFNSIKKPYKIIIGQKIWMGDFLIDKNNNDCSILNLEKNSIKQHNSCEVVFKNLLNIEKFLKDNIKTKKICFFCIKKIKKNNNSLKLKFFNFSNNWSWPVKNKNTKYFYIDKLGNKRIEIIGFKGQPVFSTAAGEVVFVTNLFKKYGLLIIIKHDQNYLSIYAFNNSVLVKEKDRVYKNQQIATMGLSSDTNLARLYFEIRYLGESINPLSILPKINTNI.

A LysM domain is found at I89 to M133.

The protein belongs to the E.coli NlpD/Haemophilus LppB family.

The polypeptide is Protein NlpD/LppB homolog (Buchnera aphidicola subsp. Acyrthosiphon pisum (strain APS) (Acyrthosiphon pisum symbiotic bacterium)).